We begin with the raw amino-acid sequence, 220 residues long: Inner membrane-spanning protein YciB (220 aa).

The next 6 membrane-spanning stretches (helical) occupy residues 20-40 (EVPP…FFFA), 57-77 (IGAP…IALA), 86-106 (LPIM…LTLW), 123-143 (LFGG…GYVF), 156-176 (KLTL…EIVW), and 187-207 (FKVW…MPLI).

The protein belongs to the YciB family.

It localises to the cell inner membrane. In terms of biological role, plays a role in cell envelope biogenesis, maintenance of cell envelope integrity and membrane homeostasis. This is Inner membrane-spanning protein YciB from Brucella abortus (strain S19).